We begin with the raw amino-acid sequence, 609 residues long: Glutamine--fructose-6-phosphate aminotransferase [isomerizing] (609 aa).

Residue C2 is the Nucleophile; for GATase activity of the active site. In terms of domain architecture, Glutamine amidotransferase type-2 spans 2–219 (CGIVGYIGGR…DGECARLTRD (218 aa)). 2 consecutive SIS domains span residues 285–424 (SSDL…LRGT) and 458–599 (LARE…VDQP). The active-site For Fru-6P isomerization activity is the K604.

Homodimer.

Its subcellular location is the cytoplasm. It catalyses the reaction D-fructose 6-phosphate + L-glutamine = D-glucosamine 6-phosphate + L-glutamate. In terms of biological role, catalyzes the first step in hexosamine metabolism, converting fructose-6P into glucosamine-6P using glutamine as a nitrogen source. This chain is Glutamine--fructose-6-phosphate aminotransferase [isomerizing], found in Gloeobacter violaceus (strain ATCC 29082 / PCC 7421).